Here is a 533-residue protein sequence, read N- to C-terminus: GMP synthase [glutamine-hydrolyzing] (533 aa).

A Glutamine amidotransferase type-1 domain is found at 25-215 (SIVIFDFGSQ…VFNICKCHAN (191 aa)). Catalysis depends on cysteine 102, which acts as the Nucleophile. Residues histidine 189 and glutamate 191 contribute to the active site. The GMPS ATP-PPase domain maps to 216 to 408 (WTMGNYIQES…LGLPDEMIWR (193 aa)). 243–249 (SGGVDSA) is a binding site for ATP.

Homodimer.

It catalyses the reaction XMP + L-glutamine + ATP + H2O = GMP + L-glutamate + AMP + diphosphate + 2 H(+). It participates in purine metabolism; GMP biosynthesis; GMP from XMP (L-Gln route): step 1/1. Its function is as follows. Catalyzes the synthesis of GMP from XMP. The chain is GMP synthase [glutamine-hydrolyzing] from Dehalococcoides mccartyi (strain ATCC BAA-2266 / KCTC 15142 / 195) (Dehalococcoides ethenogenes (strain 195)).